A 357-amino-acid chain; its full sequence is Elongation factor Ts (357 aa).

The segment at Thr82–Val85 is involved in Mg(2+) ion dislocation from EF-Tu.

It belongs to the EF-Ts family.

The protein resides in the cytoplasm. Functionally, associates with the EF-Tu.GDP complex and induces the exchange of GDP to GTP. It remains bound to the aminoacyl-tRNA.EF-Tu.GTP complex up to the GTP hydrolysis stage on the ribosome. The protein is Elongation factor Ts of Campylobacter jejuni (strain RM1221).